We begin with the raw amino-acid sequence, 479 residues long: BURP domain-containing protein 4 (479 aa).

Positions 1 to 46 (MVGKGNECAAARRRFSLRAAAASSSSSSFLPCLLLAAALSAGCCRA) are cleaved as a signal peptide. The disordered stretch occupies residues 158-177 (RADGPPKQPATFPASPNGEK). The BURP domain maps to 254-479 (LFLMKKLHPG…PQGYVLWLAN (226 aa)). The N-linked (GlcNAc...) asparagine glycan is linked to N445.

As to expression, expressed in stamen.

The chain is BURP domain-containing protein 4 (BURP4) from Oryza sativa subsp. japonica (Rice).